The primary structure comprises 913 residues: MNSTGSNYSLKHNNTQDNNHNSEESVTNKTGELDKPGVKDGQALSKEEKLKRRQEQLAAWMQKRQQENQEPSGKVTISATDETNIDKEKLIRQQRIEEWKRKRLQKSEGLETDRSKIKTFEVKSSNEPTIKINASMKKTITPANGRSKKRPIFGDEDEDDEKESKPKFKKPTLDLAEIEEKKPEKSIDTEIDELDKYLSLLEEKEQGVENKKIENHDDDGIANGPGVGNVNESDDEEIDEDQKQQDILSSKLNRLQNKQKQLDDVDHNQIQYHPFRKDFYTEPTEISKLPEEEVANLRLKLDGIKVRGVNCTRPIIRWSQLGLPSTIMSIIEGRLNYSSPSSIQAQAIPAIMSGRDIIGVAKTGSGKTLSFVLPLLRHIQDQPPLKKGDGPIGLIMTPTRELALQIHKELNHFTKKLNISSCCCFGGSSIESQIAELKKGAQIIVGTPGRIIDLLAANSGRVTNLQRVTYLVLDEADRMFDMGFEPQVTKVFTRVRPDRQTVLFSATFPRKMELLAKKILDNPMEIVVGGISVVASEITQKVELFENEDDKSLEEAKFSKLLSTLNDYGDKDAECKILIFVEKQIAADELLVKLLTEKYPCLAIHGGKDQIDRKHAIREFSSSNSGVNILIATSIAARGLDVKGLNLVINYEAASHMEDYVHRVGRTGRAGRKGTAITFVSSKQGRAITDLVKAMRLSKVSEDEINPRLIEISTKFLEGVKSGKEKYNFGFSGKGLDNLQEIRESNRDLERKVYGEENDSSTFKANEKKQNKTDIHQSDLDVKLPDFHIIEGRAPETAGPDKCKFHSRITINDLPQKARWITVNRDSLSKVIESTGTSITNKGNYYPPNSKIPKTIKQNGKEVTPPPKLYLLVEGLTEKAVHDAIILLREKMIEGLEVAAKEESMGPTGKYTV.

Positions 1-30 (MNSTGSNYSLKHNNTQDNNHNSEESVTNKT) are enriched in polar residues. Disordered regions lie at residues 1 to 189 (MNST…SIDT) and 209 to 244 (ENKKIENHDDDGIANGPGVGNVNESDDEEIDEDQKQ). Positions 45-55 (SKEEKLKRRQE) are enriched in basic and acidic residues. Positions 68–82 (NQEPSGKVTISATDE) are enriched in polar residues. Composition is skewed to basic and acidic residues over residues 84 to 121 (NIDKEKLIRQQRIEEWKRKRLQKSEGLETDRSKIKTFE), 178 to 188 (IEEKKPEKSID), and 209 to 219 (ENKKIENHDDD). A coiled-coil region spans residues 192-265 (DELDKYLSLL…QNKQKQLDDV (74 aa)). The short motif at 316-345 (IRWSQLGLPSTIMSIIEGRLNYSSPSSIQA) is the Q motif element. Residues 348 to 526 (IPAIMSGRDI…KKILDNPMEI (179 aa)) form the Helicase ATP-binding domain. 361 to 368 (AKTGSGKT) is a binding site for ATP. Residues 474–477 (DEAD) carry the DEAD box motif. The 150-residue stretch at 564–713 (TLNDYGDKDA…EINPRLIEIS (150 aa)) folds into the Helicase C-terminal domain. The segment at 755–774 (GEENDSSTFKANEKKQNKTD) is disordered. Residues 765–774 (ANEKKQNKTD) show a composition bias toward basic and acidic residues.

It belongs to the DEAD box helicase family. DDX46/PRP5 subfamily.

It is found in the nucleus. The catalysed reaction is ATP + H2O = ADP + phosphate + H(+). ATP-dependent RNA helicase involved spliceosome assembly and in nuclear splicing. Catalyzes an ATP-dependent conformational change of U2 snRNP. Bridges U1 and U2 snRNPs and enables stable U2 snRNP association with intron RNA. In Debaryomyces hansenii (strain ATCC 36239 / CBS 767 / BCRC 21394 / JCM 1990 / NBRC 0083 / IGC 2968) (Yeast), this protein is Pre-mRNA-processing ATP-dependent RNA helicase PRP5 (PRP5).